The primary structure comprises 275 residues: Type III pantothenate kinase (275 aa).

6-13 (DAGNTNIV) is a binding site for ATP. Residue 108–111 (GADR) participates in substrate binding. Aspartate 110 functions as the Proton acceptor in the catalytic mechanism. Aspartate 130 provides a ligand contact to K(+). An ATP-binding site is contributed by threonine 133. Threonine 187 is a binding site for substrate.

The protein belongs to the type III pantothenate kinase family. In terms of assembly, homodimer. NH4(+) is required as a cofactor. It depends on K(+) as a cofactor.

Its subcellular location is the cytoplasm. The enzyme catalyses (R)-pantothenate + ATP = (R)-4'-phosphopantothenate + ADP + H(+). It functions in the pathway cofactor biosynthesis; coenzyme A biosynthesis; CoA from (R)-pantothenate: step 1/5. Catalyzes the phosphorylation of pantothenate (Pan), the first step in CoA biosynthesis. This Zymomonas mobilis subsp. mobilis (strain ATCC 31821 / ZM4 / CP4) protein is Type III pantothenate kinase.